The chain runs to 274 residues: NH(3)-dependent NAD(+) synthetase (274 aa).

46 to 53 (GISGGQDS) serves as a coordination point for ATP. A Mg(2+)-binding site is contributed by Asp-52. Residue Arg-140 coordinates deamido-NAD(+). Thr-160 is an ATP binding site. Residue Glu-165 coordinates Mg(2+). 2 residues coordinate deamido-NAD(+): Lys-173 and Asp-180. Residues Lys-189 and Thr-211 each coordinate ATP. Position 260 to 261 (260 to 261 (HK)) interacts with deamido-NAD(+).

This sequence belongs to the NAD synthetase family. Homodimer.

The enzyme catalyses deamido-NAD(+) + NH4(+) + ATP = AMP + diphosphate + NAD(+) + H(+). It functions in the pathway cofactor biosynthesis; NAD(+) biosynthesis; NAD(+) from deamido-NAD(+) (ammonia route): step 1/1. In terms of biological role, catalyzes the ATP-dependent amidation of deamido-NAD to form NAD. Uses ammonia as a nitrogen source. The polypeptide is NH(3)-dependent NAD(+) synthetase (Nocardia farcinica (strain IFM 10152)).